A 198-amino-acid chain; its full sequence is Recombination protein RecR (198 aa).

The C4-type zinc-finger motif lies at 57 to 72; it reads CEKCNTFTEAQICEVC. The Toprim domain maps to 80 to 175; that stretch reads TLLCVVETPA…AVTRLARGVP (96 aa).

The protein belongs to the RecR family.

In terms of biological role, may play a role in DNA repair. It seems to be involved in an RecBC-independent recombinational process of DNA repair. It may act with RecF and RecO. In Burkholderia ambifaria (strain MC40-6), this protein is Recombination protein RecR.